Consider the following 257-residue polypeptide: UPF0246 protein Mmc1_3117 (257 aa).

This sequence belongs to the UPF0246 family.

The polypeptide is UPF0246 protein Mmc1_3117 (Magnetococcus marinus (strain ATCC BAA-1437 / JCM 17883 / MC-1)).